A 375-amino-acid chain; its full sequence is uncharacterized protein (375 aa).

This is an uncharacterized protein from Ureaplasma parvum serovar 3 (strain ATCC 700970).